The following is a 461-amino-acid chain: Eukaryotic translation initiation factor 3 subunit M (461 aa).

The interval 42–61 (LLEPLRQQEQSDAEPDRKQR) is disordered. Residues 205 to 376 (DQELAQTHVV…SEFLVHRATY (172 aa)) form the PCI domain. Residues 422-461 (AAEEAAQGKSGDKKGDRRQRRDQPQQSQPAPEAATAVAAE) form a disordered region. The segment covering 431–444 (SGDKKGDRRQRRDQ) has biased composition (basic and acidic residues). Residues 445–461 (PQQSQPAPEAATAVAAE) are compositionally biased toward low complexity.

It belongs to the eIF-3 subunit M family. In terms of assembly, component of the eukaryotic translation initiation factor 3 (eIF-3) complex.

The protein resides in the cytoplasm. Functionally, component of the eukaryotic translation initiation factor 3 (eIF-3) complex, which is involved in protein synthesis of a specialized repertoire of mRNAs and, together with other initiation factors, stimulates binding of mRNA and methionyl-tRNAi to the 40S ribosome. The eIF-3 complex specifically targets and initiates translation of a subset of mRNAs involved in cell proliferation. The chain is Eukaryotic translation initiation factor 3 subunit M from Aspergillus terreus (strain NIH 2624 / FGSC A1156).